Here is a 330-residue protein sequence, read N- to C-terminus: MEIISVIVIGGLVLVAIVATLYMVPLRLWIAAQASGAGVSMLTLIAMRLRRVPPDQIVNARISAVKAGLEEVSVDMLEAHYLARGRVEAVVNALISAGKAGMELDFSRAAAIDLAGRNVLEAVAMSVNPRVIETPKVSAVAKDGIQLLAIARVTVRANIDRLVGGAGEQTVLARVGEGVVSTIGSADDYKHVLENPDTISKNVLKKGLDAGTAFEILSIDIADVDVGSNIGAKLQTEQAEADKQVAQAKAESRRALAVAQEQEMKAKTQEMRAKLVEAESTIPLAVAEALRTGKLGVMDYYNMRNVIADTEMRQGIAGTTGGKPDPAGES.

2 helical membrane passes run 3–23 (IISVIVIGGLVLVAIVATLYM) and 26–46 (LRLWIAAQASGAGVSMLTLIA).

It belongs to the flotillin-like FloA family. Homooligomerizes.

It localises to the cell membrane. It is found in the membrane raft. Functionally, found in functional membrane microdomains (FMM) that may be equivalent to eukaryotic membrane rafts. FMMs are highly dynamic and increase in number as cells age. Flotillins are thought to be important factors in membrane fluidity. In Sorangium cellulosum (strain So ce56) (Polyangium cellulosum (strain So ce56)), this protein is Flotillin-like protein FloA.